Here is a 256-residue protein sequence, read N- to C-terminus: MNSLSLELNKEQEVLIISDVENSESIINQVKELSKTVTTSLSKEQQQIQNNFDHVIIISSKPFNSALISMYSNLLKKGGKLSIYQTNENETLVNSGMDFLIGGLVDFKATSNSTYKTIVHADKPSWDTNESSTINIPSTSSNNPWASIEGGDRINENDLVSENDKTSKPATTLDDCEVGKTKKACKNCTCGRAEEENQSKPKLTKEMIENPGVGSSCGNCSLGDAFRCGGCPYRGLPTFKVGEKIQLPDDFLVDDI.

The N-terminal SAM-like domain stretch occupies residues 1–136; sequence MNSLSLELNK…DTNESSTINI (136 aa). Residues 126-148 are disordered; the sequence is WDTNESSTINIPSTSSNNPWASI. Residues 131–144 show a composition bias toward low complexity; that stretch reads SSTINIPSTSSNNP. The tract at residues 137-166 is linker; the sequence is PSTSSNNPWASIEGGDRINENDLVSENDKT. [2Fe-2S] cluster is bound by residues C176, C185, C188, and C190. Residues 176–190 form a fe-S binding site A region; the sequence is CEVGKTKKACKNCTC. 4 residues coordinate [4Fe-4S] cluster: C217, C220, C228, and C231. Short sequence motifs (cx2C motif) lie at residues 217-220 and 228-231; these read CGNC and CGGC. Residues 217 to 231 are fe-S binding site B; it reads CGNCSLGDAFRCGGC.

The protein belongs to the anamorsin family. Monomer. It depends on [2Fe-2S] cluster as a cofactor. [4Fe-4S] cluster is required as a cofactor.

The protein resides in the cytoplasm. It is found in the mitochondrion intermembrane space. Functionally, component of the cytosolic iron-sulfur (Fe-S) protein assembly (CIA) machinery. Required for the maturation of extramitochondrial Fe-S proteins. Part of an electron transfer chain functioning in an early step of cytosolic Fe-S biogenesis, facilitating the de novo assembly of a [4Fe-4S] cluster on the cytosolic Fe-S scaffold complex. Electrons are transferred from NADPH via a FAD- and FMN-containing diflavin oxidoreductase. Together with the diflavin oxidoreductase, also required for the assembly of the diferric tyrosyl radical cofactor of ribonucleotide reductase (RNR), probably by providing electrons for reduction during radical cofactor maturation in the catalytic small subunit. This Dictyostelium discoideum (Social amoeba) protein is Anamorsin homolog (rsc43).